The following is a 156-amino-acid chain: Small ribosomal subunit protein uS7 (156 aa).

Belongs to the universal ribosomal protein uS7 family. In terms of assembly, part of the 30S ribosomal subunit. Contacts proteins S9 and S11.

Its function is as follows. One of the primary rRNA binding proteins, it binds directly to 16S rRNA where it nucleates assembly of the head domain of the 30S subunit. Is located at the subunit interface close to the decoding center, probably blocks exit of the E-site tRNA. The polypeptide is Small ribosomal subunit protein uS7 (Herminiimonas arsenicoxydans).